Consider the following 440-residue polypeptide: Gap junction alpha-8 protein (440 aa).

The stretch at 2 to 12 (GDWSFLGNILE) is an intramembrane region. Topologically, residues 13 to 21 (EVNEHSTVI) are cytoplasmic. A helical transmembrane segment spans residues 22 to 42 (GRVWLTVLFIFRILILGTAAE). Residues 43 to 71 (FVWGDEQSDFVCNTQQPGCENVCYDEAFP) are Extracellular-facing. 3 disulfides stabilise this stretch: Cys-54–Cys-201, Cys-61–Cys-195, and Cys-65–Cys-190. Residues 72–92 (ISHIRLWVLQIIFVSTPSLMY) traverse the membrane as a helical segment. At 93-161 (VGHAVHHVRM…GTLLRTYVCH (69 aa)) the chain is on the cytoplasmic side. The tract at residues 111 to 143 (AEELCQQSRSNGGERVPIAPDQASIRKSSSSSK) is disordered. Residues 162–182 (IIFKTLFEVGFIVGHYFLYGF) form a helical membrane-spanning segment. Residues 183–210 (RILPLYRCSRWPCPNVVDCFVSRPTEKT) lie on the Extracellular side of the membrane. Residues 211 to 231 (IFILFMLSVAFVSLFLNIMEM) traverse the membrane as a helical segment. Topologically, residues 232 to 440 (SHLGMKGIRS…SRARSDDLTI (209 aa)) are cytoplasmic. The tract at residues 338 to 440 (VEREEPPIEE…SRARSDDLTI (103 aa)) is disordered. Basic and acidic residues-rich tracts occupy residues 353 to 364 (VGEKKQEAEKVA) and 374 to 399 (PDRE…EKVT). Positions 423 to 432 (LSRLSKASSR) are enriched in low complexity.

This sequence belongs to the connexin family. Alpha-type (group II) subfamily. In terms of assembly, a hemichannel or connexon is composed of a hexamer of connexins. A functional gap junction is formed by the apposition of two hemichannels. Forms heteromeric channels with GJA3. Detected in eye lens (at protein level). Eye lens.

The protein localises to the cell membrane. The protein resides in the cell junction. It is found in the gap junction. Its function is as follows. Structural component of eye lens gap junctions. Gap junctions are dodecameric channels that connect the cytoplasm of adjoining cells. They are formed by the docking of two hexameric hemichannels, one from each cell membrane. Small molecules and ions diffuse from one cell to a neighboring cell via the central pore. This is Gap junction alpha-8 protein (Gja8) from Mus musculus (Mouse).